Reading from the N-terminus, the 120-residue chain is Ribonuclease P protein component (120 aa).

Belongs to the RnpA family. In terms of assembly, consists of a catalytic RNA component (M1 or rnpB) and a protein subunit.

It catalyses the reaction Endonucleolytic cleavage of RNA, removing 5'-extranucleotides from tRNA precursor.. Functionally, RNaseP catalyzes the removal of the 5'-leader sequence from pre-tRNA to produce the mature 5'-terminus. It can also cleave other RNA substrates such as 4.5S RNA. The protein component plays an auxiliary but essential role in vivo by binding to the 5'-leader sequence and broadening the substrate specificity of the ribozyme. The protein is Ribonuclease P protein component of Microcystis aeruginosa (strain NIES-843 / IAM M-2473).